The primary structure comprises 415 residues: Sensor protein kinase WalK (415 aa).

The HAMP domain maps to 11 to 63 (RTITKPITDMRNQTVEMSRGNYTQRVKIYGNDEIGELALAFNNLSKRVQEAQA). Positions 68-138 (EKRRLDSVIT…EIQENNDSFL (71 aa)) constitute a PAS domain. Positions 78, 81, 171, and 175 each coordinate Zn(2+). The PAC domain occupies 121-185 (LEDEFKLEEI…QQQVERERRE (65 aa)). One can recognise a Histidine kinase domain in the interval 189–407 (NVSHELRTPL…SIFITLPCEV (219 aa)). Residue H192 is modified to Phosphohistidine; by autocatalysis.

Forms homodimers. Forms homooligomers. It depends on NH4(+) as a cofactor. Autophosphorylated.

It localises to the cell membrane. The catalysed reaction is ATP + protein L-histidine = ADP + protein N-phospho-L-histidine.. With respect to regulation, by zinc. Zinc-binding negatively regulates WalK kinase activity and thus autophosphorylation. Functionally, member of the two-component regulatory system WalK/WalR that regulates genes involved in cell wall metabolism, virulence regulation, biofilm production, oxidative stress resistance and antibiotic resistance via direct or indirect regulation of autolysins. Functions as a sensor protein kinase which is autophosphorylated at a histidine residue in the dimerization domain and transfers its phosphate group to the conserved aspartic acid residue in the regulatory domain of WalR. In turn, WalR binds to the upstream promoter regions of the target genes to positively and negatively regulate their expression. This chain is Sensor protein kinase WalK (walK), found in Staphylococcus aureus.